Reading from the N-terminus, the 219-residue chain is Ribose-5-phosphate isomerase A (219 aa).

Residues 28–31 (SGST), 81–84 (DGAD), and 94–97 (KGGG) contribute to the substrate site. Glu-103 (proton acceptor) is an active-site residue. Residue Lys-121 participates in substrate binding.

Belongs to the ribose 5-phosphate isomerase family. In terms of assembly, homodimer.

The enzyme catalyses aldehydo-D-ribose 5-phosphate = D-ribulose 5-phosphate. It participates in carbohydrate degradation; pentose phosphate pathway; D-ribose 5-phosphate from D-ribulose 5-phosphate (non-oxidative stage): step 1/1. Its function is as follows. Catalyzes the reversible conversion of ribose-5-phosphate to ribulose 5-phosphate. This is Ribose-5-phosphate isomerase A from Actinobacillus pleuropneumoniae serotype 3 (strain JL03).